Reading from the N-terminus, the 125-residue chain is Large ribosomal subunit protein bL12 (125 aa).

It belongs to the bacterial ribosomal protein bL12 family. In terms of assembly, homodimer. Part of the ribosomal stalk of the 50S ribosomal subunit. Forms a multimeric L10(L12)X complex, where L10 forms an elongated spine to which 2 to 4 L12 dimers bind in a sequential fashion. Binds GTP-bound translation factors.

Forms part of the ribosomal stalk which helps the ribosome interact with GTP-bound translation factors. Is thus essential for accurate translation. The sequence is that of Large ribosomal subunit protein bL12 from Chlorobium phaeobacteroides (strain DSM 266 / SMG 266 / 2430).